A 1082-amino-acid chain; its full sequence is Inner tegument protein (1082 aa).

The tract at residues 604–1082 (DHIDCLFNIS…QQDLIAPLTF (479 aa)) is interaction with large tegument protein.

The protein belongs to the herpesviridae inner tegument protein family. In terms of assembly, interacts (via C-terminus) with the large tegument protein/LTP (via N-terminus).

Its subcellular location is the virion tegument. It is found in the host cytoplasm. It localises to the host nucleus. The protein localises to the host Golgi apparatus. The protein resides in the host trans-Golgi network. Its function is as follows. Plays an essential role in cytoplasmic secondary envelopment during viral egress. Interacts with the capsid via the large tegument protein/LTP and participates in its transport to the host trans-Golgi network (TGN) where secondary envelopment occurs. Modulates tegumentation and capsid accumulation at the viral assembly complex. The polypeptide is Inner tegument protein (U30) (Homo sapiens (Human)).